A 966-amino-acid polypeptide reads, in one-letter code: Muscular LMNA-interacting protein (966 aa).

S129 is modified (phosphoserine). Disordered stretches follow at residues 132-154, 182-207, 303-337, 354-388, 434-562, 597-684, 785-837, and 929-966; these read EDEATCRQGEQGPPGATGNIATR, SHPEIPHGIAPQQKHGQLTSPTTSEQ, LAPEAQKKVSTSSALNPREDVRTSPSPASGASLRS, PSPKPLTSSSHGSLSTVCSQTSSSGNLSKSGLKSP, IKQT…TRPS, KRTC…TPSL, SMHS…SQLT, and SLRDEQEKSPTLLSQDTYNKPGHPMVTIPEHDTLDSKE. Positions 144–810 are required for interaction with ISL1; sequence PPGATGNIAT…GSETIKTPTT (667 aa). 2 stretches are compositionally biased toward polar residues: residues 195–207 and 325–337; these read KHGQLTSPTTSEQ and TSPSPASGASLRS. Composition is skewed to low complexity over residues 354 to 387, 437 to 455, and 478 to 497; these read PSPKPLTSSSHGSLSTVCSQTSSSGNLSKSGLKS, TPSTPKKSLSSCSLTTGST, and PLSQAQPPSPPALASSSYAA. S486 is subject to Phosphoserine. The segment covering 507 to 521 has biased composition (polar residues); the sequence is TLRSSTTPPQSQTDL. Basic and acidic residues-rich tracts occupy residues 542 to 555 and 597 to 607; these read GRKDGDLRAPEKNR and KRTCSQRHSDQ. Polar residues-rich tracts occupy residues 639-649 and 657-684; these read SSLTQALQRSP and GSATCPSRTGMPDSTASNRSSRVSTPSL. The segment covering 785-797 has biased composition (low complexity); it reads SMHSSDSPSRPSQ. The residue at position 791 (S791) is a Phosphoserine. Polar residues predominate over residues 798-810; sequence TMLGSETIKTPTT. The segment covering 825–834 has biased composition (low complexity); that stretch reads SSSSSTTSES. Residues 937 to 946 show a composition bias toward polar residues; the sequence is SPTLLSQDTY. The span at 957–966 shows a compositional bias: basic and acidic residues; sequence PEHDTLDSKE.

As to quaternary structure, directly interacts with LMNA. Interacts with ISL1 (via N-terminal domain); the interaction represses ISL1 transactivator activity. Interactions of ISL1 with MLIP1 and GCN5/KAT2A may be mutually exclusive. In terms of tissue distribution, expressed in cardiomyoctes. Expression is highly reduced in hypertrophic cardiomyocytes.

Its subcellular location is the nucleus. The protein localises to the nucleus envelope. It localises to the PML body. The protein resides in the cytoplasm. It is found in the cytosol. Its subcellular location is the cell membrane. The protein localises to the sarcolemma. Functionally, required for myoblast differentiation into myotubes, possibly acting as a transcriptional regulator of the myogenic program. Required for cardiac adaptation to stress through integrated regulation of the AKT/mTOR pathways and FOXO1. Regulates cardiac homeostasis and plays a role in the protection against cardiac hypertrophy. Binds chromatin. May act as a transcriptional cofactor for ISL1, repressing its transcriptional activity. May also repress MYOCD transcriptional activity. The polypeptide is Muscular LMNA-interacting protein (Rattus norvegicus (Rat)).